The sequence spans 228 residues: UPF0173 metal-dependent hydrolase ABC2731 (228 aa).

Belongs to the UPF0173 family.

The polypeptide is UPF0173 metal-dependent hydrolase ABC2731 (Shouchella clausii (strain KSM-K16) (Alkalihalobacillus clausii)).